The sequence spans 128 residues: 3-aminoacrylate deaminase RutC (128 aa).

The protein belongs to the RutC family.

The catalysed reaction is (Z)-3-aminoacrylate + H2O + H(+) = 3-oxopropanoate + NH4(+). Functionally, involved in pyrimidine catabolism. Catalyzes the deamination of 3-aminoacrylate to malonic semialdehyde, a reaction that can also occur spontaneously. RutC may facilitate the reaction and modulate the metabolic fitness, rather than catalyzing essential functions. In Agrobacterium fabrum (strain C58 / ATCC 33970) (Agrobacterium tumefaciens (strain C58)), this protein is 3-aminoacrylate deaminase RutC.